The primary structure comprises 98 residues: Scrapie-responsive protein 1 (98 aa).

The signal sequence occupies residues 1 to 20; that stretch reads MKLMVLVFTIGLTLLLGVQA. Asparagine 72 is a glycosylation site (N-linked (GlcNAc...) asparagine).

The protein belongs to the SCRG1 family. As to expression, expressed abundantly in the central nervous system of adult, but not at all in fetal brain. High levels of SCRG1 transcripts are also observed in testis and aorta.

It localises to the secreted. The protein is Scrapie-responsive protein 1 (SCRG1) of Homo sapiens (Human).